We begin with the raw amino-acid sequence, 329 residues long: rRNA 2'-O-methyltransferase fibrillarin (329 aa).

A disordered region spans residues 1-85 (MAFGAPRGRG…GGARGGARGG (85 aa)). A compositionally biased stretch (gly residues) spans 13–84 (RGGFGGRGGS…RGGARGGARG (72 aa)). Residues 181 to 182 (TS), 200 to 201 (EF), 225 to 226 (DA), and 245 to 248 (DVAQ) contribute to the S-adenosyl-L-methionine site.

This sequence belongs to the methyltransferase superfamily. Fibrillarin family. Component of box C/D small nucleolar ribonucleoprotein (snoRNP) particles that contain SNU13, NOP1, SIK1/NOP56 and NOP58, plus a guide RNA. By homology to other fibrillarins, some or all of the N-terminal domain arginines are modified to asymmetric dimethylarginine (DMA).

The protein localises to the nucleus. The protein resides in the nucleolus. It carries out the reaction L-glutaminyl-[histone H2A] + S-adenosyl-L-methionine = N(5)-methyl-L-glutaminyl-[histone H2A] + S-adenosyl-L-homocysteine + H(+). Functionally, S-adenosyl-L-methionine-dependent methyltransferase that has the ability to methylate both RNAs and proteins. Involved in pre-rRNA processing. Utilizes the methyl donor S-adenosyl-L-methionine to catalyze the site-specific 2'-hydroxyl methylation of ribose moieties in pre-ribosomal RNA. Site specificity is provided by a guide RNA that base pairs with the substrate. Methylation occurs at a characteristic distance from the sequence involved in base pairing with the guide RNA. Also acts as a protein methyltransferase by mediating methylation of 'Gln-105' of histone H2A (H2AQ105me), a modification that impairs binding of the FACT complex and is specifically present at 35S ribosomal DNA locus. In Debaryomyces hansenii (strain ATCC 36239 / CBS 767 / BCRC 21394 / JCM 1990 / NBRC 0083 / IGC 2968) (Yeast), this protein is rRNA 2'-O-methyltransferase fibrillarin (NOP1).